Reading from the N-terminus, the 239-residue chain is Uridylate kinase (239 aa).

13-16 (KVSG) contacts ATP. G55 contacts UMP. ATP is bound by residues G56 and R60. UMP is bound by residues D75 and 136 to 143 (TGNPFCTT). ATP contacts are provided by T163, Q164, Y169, and D172.

Belongs to the UMP kinase family. Homohexamer.

Its subcellular location is the cytoplasm. The catalysed reaction is UMP + ATP = UDP + ADP. It functions in the pathway pyrimidine metabolism; CTP biosynthesis via de novo pathway; UDP from UMP (UMPK route): step 1/1. Its activity is regulated as follows. Inhibited by UTP. In terms of biological role, catalyzes the reversible phosphorylation of UMP to UDP. In Rickettsia bellii (strain RML369-C), this protein is Uridylate kinase.